We begin with the raw amino-acid sequence, 552 residues long: Phosphoglucomutase (552 aa).

Serine 143 functions as the Phosphoserine intermediate in the catalytic mechanism. Mg(2+)-binding residues include serine 143, aspartate 295, aspartate 297, and aspartate 299.

This sequence belongs to the phosphohexose mutase family. Mg(2+) serves as cofactor.

The catalysed reaction is alpha-D-glucose 1-phosphate = alpha-D-glucose 6-phosphate. It functions in the pathway glycolipid metabolism; diglucosyl-diacylglycerol biosynthesis. In terms of biological role, catalyzes the interconversion between glucose-6-phosphate and alpha-glucose-1-phosphate. This is the first step in the biosynthesis of diglucosyl-diacylglycerol (Glc2-DAG), i.e. the predominant glycolipid found in the S.aureus membrane, which is also used as a membrane anchor for lipoteichoic acid (LTA). In Staphylococcus aureus (strain USA300), this protein is Phosphoglucomutase (pgcA).